Reading from the N-terminus, the 437-residue chain is 3-phosphoshikimate 1-carboxyvinyltransferase (437 aa).

Residues K22, S23, and R27 each contribute to the 3-phosphoshikimate site. K22 contacts phosphoenolpyruvate. Residues G96 and R125 each coordinate phosphoenolpyruvate. Residues S170, Q172, D323, and K350 each contribute to the 3-phosphoshikimate site. Q172 contacts phosphoenolpyruvate. The active-site Proton acceptor is D323. R354 and R396 together coordinate phosphoenolpyruvate.

It belongs to the EPSP synthase family. Monomer.

It localises to the cytoplasm. It carries out the reaction 3-phosphoshikimate + phosphoenolpyruvate = 5-O-(1-carboxyvinyl)-3-phosphoshikimate + phosphate. Its pathway is metabolic intermediate biosynthesis; chorismate biosynthesis; chorismate from D-erythrose 4-phosphate and phosphoenolpyruvate: step 6/7. Catalyzes the transfer of the enolpyruvyl moiety of phosphoenolpyruvate (PEP) to the 5-hydroxyl of shikimate-3-phosphate (S3P) to produce enolpyruvyl shikimate-3-phosphate and inorganic phosphate. This chain is 3-phosphoshikimate 1-carboxyvinyltransferase, found in Synechococcus sp. (strain RCC307).